A 344-amino-acid chain; its full sequence is Uroporphyrinogen decarboxylase (344 aa).

Substrate-binding positions include 29–33, Asp-79, Tyr-153, Ser-208, and His-324; that span reads RQAGR.

This sequence belongs to the uroporphyrinogen decarboxylase family. In terms of assembly, homodimer.

It is found in the cytoplasm. The enzyme catalyses uroporphyrinogen III + 4 H(+) = coproporphyrinogen III + 4 CO2. Its pathway is porphyrin-containing compound metabolism; protoporphyrin-IX biosynthesis; coproporphyrinogen-III from 5-aminolevulinate: step 4/4. In terms of biological role, catalyzes the decarboxylation of four acetate groups of uroporphyrinogen-III to yield coproporphyrinogen-III. This chain is Uroporphyrinogen decarboxylase, found in Rhizorhabdus wittichii (strain DSM 6014 / CCUG 31198 / JCM 15750 / NBRC 105917 / EY 4224 / RW1) (Sphingomonas wittichii).